We begin with the raw amino-acid sequence, 287 residues long: Very long chain fatty acid elongase 4 (287 aa).

3 helical membrane passes run 33–53, 64–84, and 115–135; these read ILVY…EHIM, PFVV…YSCV, and FWVF…VFLV. A HxxHH motif motif is present at residues 145–149; it reads HWYHH. H148 (nucleophile) is an active-site residue. Transmembrane regions (helical) follow at residues 150–170, 172–192, 199–219, and 241–261; these read LTVA…GLWF, TMNY…ACGM, IAPF…LIVL, and LGLV…GKLY.

This sequence belongs to the ELO family.

The protein resides in the membrane. The enzyme catalyses a very-long-chain acyl-CoA + malonyl-CoA + H(+) = a very-long-chain 3-oxoacyl-CoA + CO2 + CoA. Involved in the synthesis of fatty acids. Elongates C16:0 and C18:0 fatty acids to C26:0, with C24:0 being the main product. The chain is Very long chain fatty acid elongase 4 from Trypanosoma cruzi (strain CL Brener).